The sequence spans 351 residues: Photosystem II D2 protein (351 aa).

A helical transmembrane segment spans residues T39–T59. Residue H116 coordinates chlorophyll a. Residues G123–P139 form a helical membrane-spanning segment. Pheophytin a is bound by residues Q128 and N141. The helical transmembrane segment at V151–A164 threads the bilayer. H196 is a binding site for chlorophyll a. The chain crosses the membrane as a helical span at residues G206–D226. Positions 213 and 260 each coordinate a plastoquinone. Residue H213 coordinates Fe cation. A Fe cation-binding site is contributed by H267. Residues G277–R293 form a helical membrane-spanning segment.

It belongs to the reaction center PufL/M/PsbA/D family. PSII is composed of 1 copy each of membrane proteins PsbA, PsbB, PsbC, PsbD, PsbE, PsbF, PsbH, PsbI, PsbJ, PsbK, PsbL, PsbM, PsbT, PsbX, PsbY, PsbZ, Psb30/Ycf12, at least 3 peripheral proteins of the oxygen-evolving complex and a large number of cofactors. It forms dimeric complexes. The D1/D2 heterodimer binds P680, chlorophylls that are the primary electron donor of PSII, and subsequent electron acceptors. It shares a non-heme iron and each subunit binds pheophytin, quinone, additional chlorophylls, carotenoids and lipids. There is also a Cl(-1) ion associated with D1 and D2, which is required for oxygen evolution. The PSII complex binds additional chlorophylls, carotenoids and specific lipids. is required as a cofactor.

It localises to the plastid. Its subcellular location is the chloroplast thylakoid membrane. The catalysed reaction is 2 a plastoquinone + 4 hnu + 2 H2O = 2 a plastoquinol + O2. In terms of biological role, photosystem II (PSII) is a light-driven water:plastoquinone oxidoreductase that uses light energy to abstract electrons from H(2)O, generating O(2) and a proton gradient subsequently used for ATP formation. It consists of a core antenna complex that captures photons, and an electron transfer chain that converts photonic excitation into a charge separation. The D1/D2 (PsbA/PsbD) reaction center heterodimer binds P680, the primary electron donor of PSII as well as several subsequent electron acceptors. D2 is needed for assembly of a stable PSII complex. This chain is Photosystem II D2 protein, found in Thalassiosira pseudonana (Marine diatom).